A 555-amino-acid polypeptide reads, in one-letter code: Glutamate--tRNA ligase (555 aa).

Residues 100 to 110 carry the 'HIGH' region motif; it reads PNPSGPLHIGH.

The protein belongs to the class-I aminoacyl-tRNA synthetase family. Glutamate--tRNA ligase type 2 subfamily.

Its subcellular location is the cytoplasm. It carries out the reaction tRNA(Glu) + L-glutamate + ATP = L-glutamyl-tRNA(Glu) + AMP + diphosphate. Catalyzes the attachment of glutamate to tRNA(Glu) in a two-step reaction: glutamate is first activated by ATP to form Glu-AMP and then transferred to the acceptor end of tRNA(Glu). This chain is Glutamate--tRNA ligase, found in Methanococcus maripaludis (strain C6 / ATCC BAA-1332).